Here is a 956-residue protein sequence, read N- to C-terminus: ATPase 11, plasma membrane-type (956 aa).

Topologically, residues 1-65 (MGDKEEVLEA…EKKESKFLKF (65 aa)) are cytoplasmic. Residues 66–85 (LGFMWNPLSWVMEAAAIMAI) traverse the membrane as a helical segment. Residues 86 to 97 (ALANGGGKPPDW) lie on the Extracellular side of the membrane. The chain crosses the membrane as a helical span at residues 98–118 (QDFVGIITLLVINSTISFIEE). Topologically, residues 119-247 (NNAGNAAAAL…GHFQQVLTAI (129 aa)) are cytoplasmic. The helical transmembrane segment at 248–268 (GNFCICSIAVGMIIEIVVMYP) threads the bilayer. Over 269-277 (IQHRAYRPG) the chain is Extracellular. The chain crosses the membrane as a helical span at residues 278–295 (IDNLLVLLIGGIPIAMPT). Residues 296–647 (VLSVTMAIGS…TSRAIFQRMK (352 aa)) are Cytoplasmic-facing. Catalysis depends on Asp-333, which acts as the 4-aspartylphosphate intermediate. Residues Asp-592 and Asp-596 each contribute to the Mg(2+) site. Residues 648–669 (NYTIYAVSITIRIVLGFMLLAL) traverse the membrane as a helical segment. The Extracellular portion of the chain corresponds to 670–674 (IWKFD). A helical membrane pass occupies residues 675–697 (FPPFMVLIIAILNDGTIMTISKD). Residues 698 to 713 (RVKPSPLPDSWKLSEI) lie on the Cytoplasmic side of the membrane. A helical transmembrane segment spans residues 714-734 (FATGVVFGSYMAMMTVIFFWA). At 735 to 759 (AYKTDFFPRTFGVSTLEKTAHDDFR) the chain is on the extracellular side. Residues 760–780 (KLASAIYLQVSIISQALIFVT) form a helical membrane-spanning segment. Residues 781-792 (RSRSWSYVERPG) are Cytoplasmic-facing. Residues 793–813 (MLLVVAFILAQLVATLIAVYA) form a helical membrane-spanning segment. Over 814–821 (NWSFAAIE) the chain is Extracellular. A helical transmembrane segment spans residues 822 to 842 (GIGWGWAGVIWLYNIVFYIPL). At 843–956 (DIIKFLIRYA…IETIQQAYTV (114 aa)) the chain is on the cytoplasmic side. Thr-889 carries the post-translational modification Phosphothreonine. Phosphoserine is present on Ser-938. Residues 954 to 956 (YTV) form an interaction with 14-3-3 proteins region. Position 955 is a phosphothreonine (Thr-955).

This sequence belongs to the cation transport ATPase (P-type) (TC 3.A.3) family. Type IIIA subfamily. As to quaternary structure, binds to 14-3-3 proteins. The binding is induced by phosphorylation of Thr-955. Binding to 14-3-3 proteins activates the H(+)-ATPase. As to expression, expressed in guard cells, mesophyll cells, leaves and roots.

The protein localises to the membrane. It carries out the reaction ATP + H2O + H(+)(in) = ADP + phosphate + 2 H(+)(out). In terms of biological role, the plasma membrane H(+) ATPase of plants and fungi generates a proton gradient that drives the active transport of nutrients by H(+)-symport. The resulting external acidification and/or internal alkinization may mediate growth responses. The polypeptide is ATPase 11, plasma membrane-type (AHA11) (Arabidopsis thaliana (Mouse-ear cress)).